A 431-amino-acid polypeptide reads, in one-letter code: Transposase for insertion sequence element IS232 (431 aa).

Residues proline 20–leucine 79 form the HTH IS21-type domain. A DNA-binding region (H-T-H motif) is located at residues lysine 35–asparagine 54. Positions tyrosine 140 to lysine 315 constitute an Integrase catalytic domain.

The protein belongs to the transposase IS21/IS408/IS1162 family.

Its function is as follows. Involved in the transposition of the insertion sequence. The sequence is that of Transposase for insertion sequence element IS232 from Bacillus thuringiensis subsp. berliner.